Here is a 319-residue protein sequence, read N- to C-terminus: 4-diphosphocytidyl-2-C-methyl-D-erythritol kinase (319 aa).

K18 is an active-site residue. 103 to 113 (PIGAGLAGGST) contacts ATP. D145 is a catalytic residue.

The protein belongs to the GHMP kinase family. IspE subfamily.

It catalyses the reaction 4-CDP-2-C-methyl-D-erythritol + ATP = 4-CDP-2-C-methyl-D-erythritol 2-phosphate + ADP + H(+). It functions in the pathway isoprenoid biosynthesis; isopentenyl diphosphate biosynthesis via DXP pathway; isopentenyl diphosphate from 1-deoxy-D-xylulose 5-phosphate: step 3/6. Functionally, catalyzes the phosphorylation of the position 2 hydroxy group of 4-diphosphocytidyl-2C-methyl-D-erythritol. The protein is 4-diphosphocytidyl-2-C-methyl-D-erythritol kinase of Prochlorococcus marinus (strain NATL2A).